The primary structure comprises 143 residues: MPDPGNRRLLAFDFGTRRIGVASGQEMLGTGQPLAMLPARDGIPDWQQIEALLADWQPDIVLVGLPLNMDDTENEMCARARKFGKRLHGRYHVTVEMVDERLTSYEAKGEVMAGGGSRDFGRHGVDDRAAVLILETWCREQAG.

It belongs to the YqgF nuclease family.

It localises to the cytoplasm. In terms of biological role, could be a nuclease involved in processing of the 5'-end of pre-16S rRNA. This chain is Putative pre-16S rRNA nuclease, found in Marinobacter nauticus (strain ATCC 700491 / DSM 11845 / VT8) (Marinobacter aquaeolei).